We begin with the raw amino-acid sequence, 370 residues long: High affinity iron permease ftrA (370 aa).

7 consecutive transmembrane segments (helical) span residues 5-25 (VFAVPIFFICFRECVETSIIV), 52-72 (VWWGVAIGLFISVCIGAGMIG), 88-108 (LWEGIFSLIASVIITIMGAAL), 148-168 (AMFLLPFITVLREGLEAVVFI), 179-199 (AFPLPVFTGILAGVAIGYLLY), 206-226 (SLQIFLIISTCILYLVAAGLF), and 293-313 (YGSVLSYNLYWIAVIVWFVAM). The disordered stretch occupies residues 335–370 (RKSAEPGNGEQDVEVSTIPSDLQTESKIPKSGASLV). A compositionally biased stretch (polar residues) spans 351–360 (TIPSDLQTES).

Belongs to the oxidase-dependent Fe transporter (OFeT) (TC 9.A.10.1) family.

It is found in the cell membrane. High affinity iron permease; part of the reductive iron assimilatory system (RIA), a siderophore-independent high affinity iron uptake mechanism. This Aspergillus fumigatus (strain ATCC MYA-4609 / CBS 101355 / FGSC A1100 / Af293) (Neosartorya fumigata) protein is High affinity iron permease ftrA.